The primary structure comprises 337 residues: WAT1-related protein At1g11460 (337 aa).

The next 10 membrane-spanning stretches (helical) occupy residues 14–34, 46–66, 83–103, 107–127, 139–159, 188–208, 220–240, 254–274, 284–304, and 309–329; these read WPPI…NALV, IIGA…AYIL, FISG…GLSY, TVAC…ALIL, AGMI…FLTF, WLLG…WILF, FSST…LSLY, FVIG…TVSV, VFVS…DFII, and LYLG…VFLW. An EamA 1 domain is found at 27–157; sequence MGSVNALVKK…IICISGALFL (131 aa). An EamA 2 domain is found at 220–328; sequence FSSTCLMSIF…GTITGLYVFL (109 aa).

It belongs to the drug/metabolite transporter (DMT) superfamily. Plant drug/metabolite exporter (P-DME) (TC 2.A.7.4) family.

The protein localises to the membrane. The sequence is that of WAT1-related protein At1g11460 from Arabidopsis thaliana (Mouse-ear cress).